A 288-amino-acid polypeptide reads, in one-letter code: Polyamine aminopropyltransferase (288 aa).

Residues 9–238 (ETLHDQFGQY…GIMTFAWATD (230 aa)) enclose the PABS domain. Residue Gln33 participates in S-methyl-5'-thioadenosine binding. Spermidine contacts are provided by His64 and Asp88. Residues Glu108 and 140 to 141 (DG) contribute to the S-methyl-5'-thioadenosine site. Asp158 acts as the Proton acceptor in catalysis. 158-161 (DCTD) contacts spermidine. Position 165 (Pro165) interacts with S-methyl-5'-thioadenosine.

The protein belongs to the spermidine/spermine synthase family. Homodimer or homotetramer.

The protein resides in the cytoplasm. The enzyme catalyses S-adenosyl 3-(methylsulfanyl)propylamine + putrescine = S-methyl-5'-thioadenosine + spermidine + H(+). It participates in amine and polyamine biosynthesis; spermidine biosynthesis; spermidine from putrescine: step 1/1. Functionally, catalyzes the irreversible transfer of a propylamine group from the amino donor S-adenosylmethioninamine (decarboxy-AdoMet) to putrescine (1,4-diaminobutane) to yield spermidine. The sequence is that of Polyamine aminopropyltransferase from Escherichia coli O17:K52:H18 (strain UMN026 / ExPEC).